The sequence spans 899 residues: AP-3 complex subunit delta (899 aa).

12 HEAT repeats span residues 37–74, 155–192, 194–229, 231–267, 268–305, 308–344, 345–382, 384–428, 480–518, 536–580, 590–613, and 614–656; these read QSPE…KLTY, ELAR…QYPE, LRDN…HNPQ, FIQL…IEPK, LRVK…LNSD, DSAV…KINT, DFIA…EDNL, DFVQ…ITAM, RTLA…LLDN, ELQQ…LIIS, SEAL…SLPL, and LLTE…TESE. 4 disordered regions span residues 668–701, 741–768, 782–801, and 849–899; these read DGIV…PTHE, NLSN…KKKK, GVNT…SARN, and AAEE…LTTE. The segment covering 743-759 has biased composition (low complexity); that stretch reads SNSKPSSSGSLVRLSSE. Residues 841-862 are a coiled coil; sequence QRLLDESAAAEEEVVVVKKKKR. Residues 857–880 are compositionally biased toward basic residues; sequence VKKKKRSKDGSKSSKKKSRSKSKP.

It belongs to the adaptor complexes large subunit family. As to quaternary structure, adaptor protein complex 3 (AP-3) is a heterotetramer composed of 2 large adaptins (APL5 and APL6), a medium adaptin (APM3) and a small adaptin (APS3).

The protein localises to the golgi apparatus. The protein resides in the cytoplasmic vesicle. It is found in the clathrin-coated vesicle membrane. Part of the AP-3 complex, an adaptor-related complex which is not clathrin-associated. The complex is associated with the Golgi region as well as more peripheral structures. It facilitates the budding of vesicles from the Golgi membrane and may be directly involved in trafficking to the vacuole. The polypeptide is AP-3 complex subunit delta (APL5) (Eremothecium gossypii (strain ATCC 10895 / CBS 109.51 / FGSC 9923 / NRRL Y-1056) (Yeast)).